A 292-amino-acid chain; its full sequence is Phosphatidylglycerol--prolipoprotein diacylglyceryl transferase (292 aa).

Transmembrane regions (helical) follow at residues 25-45 (ITLH…WWYA), 70-90 (FVVW…VLVW), 102-122 (IIAV…IIIA), 138-158 (FDII…CNFI), 193-213 (FMEG…FKAF), 217-237 (GTVS…SEVY), and 255-275 (GFTY…YLLL). Arg-153 contributes to the a 1,2-diacyl-sn-glycero-3-phospho-(1'-sn-glycerol) binding site.

This sequence belongs to the Lgt family.

It localises to the cell inner membrane. It carries out the reaction L-cysteinyl-[prolipoprotein] + a 1,2-diacyl-sn-glycero-3-phospho-(1'-sn-glycerol) = an S-1,2-diacyl-sn-glyceryl-L-cysteinyl-[prolipoprotein] + sn-glycerol 1-phosphate + H(+). Its pathway is protein modification; lipoprotein biosynthesis (diacylglyceryl transfer). Functionally, catalyzes the transfer of the diacylglyceryl group from phosphatidylglycerol to the sulfhydryl group of the N-terminal cysteine of a prolipoprotein, the first step in the formation of mature lipoproteins. This is Phosphatidylglycerol--prolipoprotein diacylglyceryl transferase from Bartonella tribocorum (strain CIP 105476 / IBS 506).